A 116-amino-acid chain; its full sequence is Large ribosomal subunit protein bL19 (116 aa).

It belongs to the bacterial ribosomal protein bL19 family.

In terms of biological role, this protein is located at the 30S-50S ribosomal subunit interface and may play a role in the structure and function of the aminoacyl-tRNA binding site. The polypeptide is Large ribosomal subunit protein bL19 (Staphylococcus saprophyticus subsp. saprophyticus (strain ATCC 15305 / DSM 20229 / NCIMB 8711 / NCTC 7292 / S-41)).